Reading from the N-terminus, the 257-residue chain is DNA repair protein RecO (257 aa).

Belongs to the RecO family.

Involved in DNA repair and RecF pathway recombination. The protein is DNA repair protein RecO of Variovorax paradoxus (strain S110).